The primary structure comprises 296 residues: Large ribosomal subunit protein uL15m (296 aa).

Residues 1-20 (MSLIKKPGGKTIEVVKNLPR) constitute a mitochondrion transit peptide. The disordered stretch occupies residues 25–59 (NLRPNPGAKTLEKRRGRGMHGGNRSGWGHKGERQR).

Belongs to the universal ribosomal protein uL15 family. In terms of assembly, component of the mitochondrial ribosome large subunit (39S) which comprises a 16S rRNA and about 50 distinct proteins.

It localises to the mitochondrion. In Danio rerio (Zebrafish), this protein is Large ribosomal subunit protein uL15m (mrpl15).